A 394-amino-acid chain; its full sequence is uncharacterized protein (394 aa).

This is an uncharacterized protein from Bacillus subtilis (strain 168).